A 261-amino-acid polypeptide reads, in one-letter code: ATP synthase subunit a (261 aa).

A propeptide spans methionine 1–leucine 14 (removed in mature form). 7 helical membrane passes run isoleucine 38–leucine 58, isoleucine 96–methionine 116, histidine 126–phenylalanine 146, phenylalanine 153–isoleucine 173, alanine 191–methionine 211, glycine 214–leucine 234, and glutamate 235–lysine 255.

This sequence belongs to the ATPase A chain family. F-type ATPases have 2 components, CF(1) - the catalytic core - and CF(0) - the membrane proton channel. CF(1) has five subunits: alpha(3), beta(3), gamma(1), delta(1), epsilon(1). CF(0) has three main subunits: a, b and c.

It is found in the mitochondrion inner membrane. Mitochondrial membrane ATP synthase (F(1)F(0) ATP synthase or Complex V) produces ATP from ADP in the presence of a proton gradient across the membrane which is generated by electron transport complexes of the respiratory chain. F-type ATPases consist of two structural domains, F(1) - containing the extramembraneous catalytic core and F(0) - containing the membrane proton channel, linked together by a central stalk and a peripheral stalk. During catalysis, ATP synthesis in the catalytic domain of F(1) is coupled via a rotary mechanism of the central stalk subunits to proton translocation. Key component of the proton channel; it may play a direct role in the translocation of protons across the membrane. This chain is ATP synthase subunit a (atp-6), found in Neurospora crassa (strain ATCC 24698 / 74-OR23-1A / CBS 708.71 / DSM 1257 / FGSC 987).